The chain runs to 451 residues: Phosphoglucosamine mutase (451 aa).

Residue serine 102 is the Phosphoserine intermediate of the active site. Mg(2+) contacts are provided by serine 102, aspartate 243, aspartate 245, and aspartate 247. Serine 102 carries the post-translational modification Phosphoserine.

It belongs to the phosphohexose mutase family. Mg(2+) serves as cofactor. In terms of processing, activated by phosphorylation.

It catalyses the reaction alpha-D-glucosamine 1-phosphate = D-glucosamine 6-phosphate. Functionally, catalyzes the conversion of glucosamine-6-phosphate to glucosamine-1-phosphate. The chain is Phosphoglucosamine mutase from Brucella abortus (strain 2308).